A 375-amino-acid polypeptide reads, in one-letter code: Erythronate-4-phosphate dehydrogenase (375 aa).

Substrate is bound by residues Ser-45 and Thr-66. NAD(+) contacts are provided by Asp-146 and Thr-175. Residue Arg-208 is part of the active site. Position 232 (Asp-232) interacts with NAD(+). Glu-237 is an active-site residue. His-254 functions as the Proton donor in the catalytic mechanism. NAD(+) is bound at residue Gly-257. A substrate-binding site is contributed by Tyr-258.

This sequence belongs to the D-isomer specific 2-hydroxyacid dehydrogenase family. PdxB subfamily. Homodimer.

The protein resides in the cytoplasm. The catalysed reaction is 4-phospho-D-erythronate + NAD(+) = (R)-3-hydroxy-2-oxo-4-phosphooxybutanoate + NADH + H(+). The protein operates within cofactor biosynthesis; pyridoxine 5'-phosphate biosynthesis; pyridoxine 5'-phosphate from D-erythrose 4-phosphate: step 2/5. In terms of biological role, catalyzes the oxidation of erythronate-4-phosphate to 3-hydroxy-2-oxo-4-phosphonooxybutanoate. The chain is Erythronate-4-phosphate dehydrogenase from Edwardsiella ictaluri (strain 93-146).